Here is a 118-residue protein sequence, read N- to C-terminus: Co-chaperonin GroES (118 aa).

It belongs to the GroES chaperonin family. As to quaternary structure, heptamer of 7 subunits arranged in a ring. Interacts with the chaperonin GroEL.

Its subcellular location is the cytoplasm. Its function is as follows. Together with the chaperonin GroEL, plays an essential role in assisting protein folding. The GroEL-GroES system forms a nano-cage that allows encapsulation of the non-native substrate proteins and provides a physical environment optimized to promote and accelerate protein folding. GroES binds to the apical surface of the GroEL ring, thereby capping the opening of the GroEL channel. The chain is Co-chaperonin GroES from Helicobacter pylori (strain HPAG1).